The sequence spans 113 residues: Ribonuclease P protein component (113 aa).

This sequence belongs to the RnpA family. Consists of a catalytic RNA component (M1 or rnpB) and a protein subunit.

It carries out the reaction Endonucleolytic cleavage of RNA, removing 5'-extranucleotides from tRNA precursor.. Functionally, RNaseP catalyzes the removal of the 5'-leader sequence from pre-tRNA to produce the mature 5'-terminus. It can also cleave other RNA substrates such as 4.5S RNA. The protein component plays an auxiliary but essential role in vivo by binding to the 5'-leader sequence and broadening the substrate specificity of the ribozyme. This is Ribonuclease P protein component from Clavibacter michiganensis subsp. michiganensis (strain NCPPB 382).